The primary structure comprises 576 residues: Mitogen-activated protein kinase 15 (576 aa).

Residues 20–50 (RPSSSSSSNNHDQIQNPPTVSNPNDDEDLKK) are disordered. Residues 28–42 (NNHDQIQNPPTVSNP) are compositionally biased toward polar residues. The 292-residue stretch at 90–381 (YQIQEVVGKG…AEEALADPYF (292 aa)) folds into the Protein kinase domain. ATP-binding positions include 96–104 (VGKGSYGVV) and Lys-119. Residue Asp-216 is the Proton acceptor of the active site. A Phosphothreonine modification is found at Thr-252. The TXY motif lies at 252-254 (TDY). Tyr-254 carries the phosphotyrosine modification. Thr-257 is subject to Phosphothreonine. The tract at residues 458–535 (EENQGPGGRS…GGGYSARNLM (78 aa)) is disordered. The span at 477-501 (LPRERVPASKNETVEERSNDIERRT) shows a compositional bias: basic and acidic residues. The segment covering 504-520 (AVASTLDSPKASQQAEG) has biased composition (polar residues).

The protein belongs to the protein kinase superfamily. CMGC Ser/Thr protein kinase family. MAP kinase subfamily. In terms of assembly, interacts with MKK7. In terms of processing, dually phosphorylated on Thr-252 and Tyr-254, which activates the enzyme.

It carries out the reaction L-seryl-[protein] + ATP = O-phospho-L-seryl-[protein] + ADP + H(+). The enzyme catalyses L-threonyl-[protein] + ATP = O-phospho-L-threonyl-[protein] + ADP + H(+). With respect to regulation, activated by threonine and tyrosine phosphorylation. The sequence is that of Mitogen-activated protein kinase 15 (MPK15) from Arabidopsis thaliana (Mouse-ear cress).